The sequence spans 468 residues: 6-phospho-beta-galactosidase (468 aa).

5 residues coordinate D-galactose 6-phosphate: Q19, H116, N159, E160, and N297. E160 functions as the Proton donor in the catalytic mechanism. E375 functions as the Nucleophile in the catalytic mechanism. S428, W429, K435, and Y437 together coordinate D-galactose 6-phosphate.

This sequence belongs to the glycosyl hydrolase 1 family.

It carries out the reaction a 6-phospho-beta-D-galactoside + H2O = D-galactose 6-phosphate + an alcohol. It functions in the pathway carbohydrate metabolism; lactose degradation; D-galactose 6-phosphate and beta-D-glucose from lactose 6-phosphate: step 1/1. This is 6-phospho-beta-galactosidase from Streptococcus pyogenes serotype M3 (strain ATCC BAA-595 / MGAS315).